Reading from the N-terminus, the 191-residue chain is Ribosome hibernation promotion factor (191 aa).

The disordered stretch occupies residues 100–123; it reads KQRQEGRPEPLPGPAEAEVNAQGS.

This sequence belongs to the HPF/YfiA ribosome-associated protein family. Long HPF subfamily. In terms of assembly, interacts with 100S ribosomes.

It is found in the cytoplasm. Its function is as follows. Required for dimerization of active 70S ribosomes into 100S ribosomes in stationary phase; 100S ribosomes are translationally inactive and sometimes present during exponential growth. The protein is Ribosome hibernation promotion factor of Deinococcus radiodurans (strain ATCC 13939 / DSM 20539 / JCM 16871 / CCUG 27074 / LMG 4051 / NBRC 15346 / NCIMB 9279 / VKM B-1422 / R1).